The primary structure comprises 172 residues: Shikimate kinase (172 aa).

Gly14–Thr19 serves as a coordination point for ATP. Ser18 is a Mg(2+) binding site. 3 residues coordinate substrate: Asp36, Arg60, and Gly82. Residue Arg120 coordinates ATP. Arg139 is a binding site for substrate. Residue Gln156 coordinates ATP.

Belongs to the shikimate kinase family. Monomer. The cofactor is Mg(2+).

It localises to the cytoplasm. The catalysed reaction is shikimate + ATP = 3-phosphoshikimate + ADP + H(+). The protein operates within metabolic intermediate biosynthesis; chorismate biosynthesis; chorismate from D-erythrose 4-phosphate and phosphoenolpyruvate: step 5/7. In terms of biological role, catalyzes the specific phosphorylation of the 3-hydroxyl group of shikimic acid using ATP as a cosubstrate. The chain is Shikimate kinase from Vibrio parahaemolyticus serotype O3:K6 (strain RIMD 2210633).